A 417-amino-acid polypeptide reads, in one-letter code: Serine hydroxymethyltransferase (417 aa).

Residues Leu-121 and 125–127 (GHL) each bind (6S)-5,6,7,8-tetrahydrofolate. Position 229 is an N6-(pyridoxal phosphate)lysine (Lys-229). Position 355 to 357 (355 to 357 (SPF)) interacts with (6S)-5,6,7,8-tetrahydrofolate.

This sequence belongs to the SHMT family. As to quaternary structure, homodimer. Pyridoxal 5'-phosphate is required as a cofactor.

It localises to the cytoplasm. The catalysed reaction is (6R)-5,10-methylene-5,6,7,8-tetrahydrofolate + glycine + H2O = (6S)-5,6,7,8-tetrahydrofolate + L-serine. It participates in one-carbon metabolism; tetrahydrofolate interconversion. The protein operates within amino-acid biosynthesis; glycine biosynthesis; glycine from L-serine: step 1/1. Catalyzes the reversible interconversion of serine and glycine with tetrahydrofolate (THF) serving as the one-carbon carrier. This reaction serves as the major source of one-carbon groups required for the biosynthesis of purines, thymidylate, methionine, and other important biomolecules. Also exhibits THF-independent aldolase activity toward beta-hydroxyamino acids, producing glycine and aldehydes, via a retro-aldol mechanism. This chain is Serine hydroxymethyltransferase, found in Xanthomonas oryzae pv. oryzae (strain MAFF 311018).